Consider the following 234-residue polypeptide: Adenosine 5'-phosphosulfate reductase (234 aa).

Residues Cys120, Cys121, Cys203, and Cys206 each coordinate [4Fe-4S] cluster. The Nucleophile; cysteine thiosulfonate intermediate role is filled by Cys229.

It belongs to the PAPS reductase family. CysH subfamily. [4Fe-4S] cluster serves as cofactor.

It is found in the cytoplasm. The catalysed reaction is [thioredoxin]-disulfide + sulfite + AMP + 2 H(+) = adenosine 5'-phosphosulfate + [thioredoxin]-dithiol. It participates in sulfur metabolism; hydrogen sulfide biosynthesis; sulfite from sulfate. In terms of biological role, catalyzes the formation of sulfite from adenosine 5'-phosphosulfate (APS) using thioredoxin as an electron donor. This is Adenosine 5'-phosphosulfate reductase from Bacillus cereus (strain AH187).